The primary structure comprises 253 residues: Ubiquinone/menaquinone biosynthesis C-methyltransferase UbiE (253 aa).

S-adenosyl-L-methionine is bound by residues Thr-76, Asp-97, Asn-125–Ala-126, and Ser-142.

This sequence belongs to the class I-like SAM-binding methyltransferase superfamily. MenG/UbiE family.

The catalysed reaction is a 2-demethylmenaquinol + S-adenosyl-L-methionine = a menaquinol + S-adenosyl-L-homocysteine + H(+). The enzyme catalyses a 2-methoxy-6-(all-trans-polyprenyl)benzene-1,4-diol + S-adenosyl-L-methionine = a 5-methoxy-2-methyl-3-(all-trans-polyprenyl)benzene-1,4-diol + S-adenosyl-L-homocysteine + H(+). The protein operates within quinol/quinone metabolism; menaquinone biosynthesis; menaquinol from 1,4-dihydroxy-2-naphthoate: step 2/2. It participates in cofactor biosynthesis; ubiquinone biosynthesis. Methyltransferase required for the conversion of demethylmenaquinol (DMKH2) to menaquinol (MKH2) and the conversion of 2-polyprenyl-6-methoxy-1,4-benzoquinol (DDMQH2) to 2-polyprenyl-3-methyl-6-methoxy-1,4-benzoquinol (DMQH2). This chain is Ubiquinone/menaquinone biosynthesis C-methyltransferase UbiE, found in Xylella fastidiosa (strain 9a5c).